We begin with the raw amino-acid sequence, 303 residues long: Acidic endochitinase WIN6.2B (303 aa).

Positions 1 to 21 (MSVWAFAFFSLFLSLSVRGSA) are cleaved as a signal peptide. The Chitin-binding type-1 domain maps to 22-62 (EQCGQQAGDALCPGGLCCSSYGWCGTTADYCGDGCQSQCDG). 4 disulfide bridges follow: Cys-24–Cys-39, Cys-33–Cys-45, Cys-38–Cys-52, and Cys-56–Cys-60. Residues 82-303 (DGYLSDIIPE…YGLLGLKDTM (222 aa)) are chitinase. Glu-150 functions as the Proton donor in the catalytic mechanism. An intrachain disulfide couples Cys-253 to Cys-286.

The protein belongs to the glycosyl hydrolase 19 family. Chitinase class I subfamily.

The catalysed reaction is Random endo-hydrolysis of N-acetyl-beta-D-glucosaminide (1-&gt;4)-beta-linkages in chitin and chitodextrins.. Functionally, defense against chitin-containing fungal pathogens. This is Acidic endochitinase WIN6.2B from Populus trichocarpa (Western balsam poplar).